The following is a 308-amino-acid chain: Protoheme IX farnesyltransferase 2 (308 aa).

The next 9 helical transmembrane spans lie at 20–40, 47–67, 92–114, 118–137, 144–164, 174–194, 218–238, 240–260, and 275–295; these read VTKPGIIMGNLIAVVGGFLLA, AVLMLATLVGLSLVVASGCAI, IPLKQVLGLGIALGVLGFGLLAW, LAALLFAAFGYLVYVGLYSL, VYGTLVGSLSGAVPPVVGYCA, LILLAMFSLWQMPHSYAIAIF, LHIVFYIALFALVSTLLPLAG, TGVGFMAVSCVTSFWWLLMAL, and QVFGFSILTIAILSLTMALDF.

This sequence belongs to the UbiA prenyltransferase family. Protoheme IX farnesyltransferase subfamily.

The protein resides in the cell inner membrane. The enzyme catalyses heme b + (2E,6E)-farnesyl diphosphate + H2O = Fe(II)-heme o + diphosphate. It participates in porphyrin-containing compound metabolism; heme O biosynthesis; heme O from protoheme: step 1/1. Functionally, converts heme B (protoheme IX) to heme O by substitution of the vinyl group on carbon 2 of heme B porphyrin ring with a hydroxyethyl farnesyl side group. The sequence is that of Protoheme IX farnesyltransferase 2 from Shewanella loihica (strain ATCC BAA-1088 / PV-4).